Reading from the N-terminus, the 370-residue chain is Quinolinate synthase (370 aa).

The iminosuccinate site is built by H62 and S83. C128 contributes to the [4Fe-4S] cluster binding site. Residues 154–156 (YAN) and S171 each bind iminosuccinate. C215 lines the [4Fe-4S] cluster pocket. Iminosuccinate contacts are provided by residues 241–243 (HPE) and T258. C312 provides a ligand contact to [4Fe-4S] cluster.

Belongs to the quinolinate synthase family. Type 1 subfamily. Requires [4Fe-4S] cluster as cofactor.

It localises to the cytoplasm. It catalyses the reaction iminosuccinate + dihydroxyacetone phosphate = quinolinate + phosphate + 2 H2O + H(+). The protein operates within cofactor biosynthesis; NAD(+) biosynthesis; quinolinate from iminoaspartate: step 1/1. In terms of biological role, catalyzes the condensation of iminoaspartate with dihydroxyacetone phosphate to form quinolinate. The chain is Quinolinate synthase from Neisseria meningitidis serogroup B (strain ATCC BAA-335 / MC58).